A 104-amino-acid polypeptide reads, in one-letter code: Large ribosomal subunit protein bL21 (104 aa).

This sequence belongs to the bacterial ribosomal protein bL21 family. As to quaternary structure, part of the 50S ribosomal subunit. Contacts protein L20.

In terms of biological role, this protein binds to 23S rRNA in the presence of protein L20. The polypeptide is Large ribosomal subunit protein bL21 (Salinispora tropica (strain ATCC BAA-916 / DSM 44818 / JCM 13857 / NBRC 105044 / CNB-440)).